Here is a 238-residue protein sequence, read N- to C-terminus: Probable metal transport system ATP-binding protein TP_0035 (238 aa).

One can recognise an ABC transporter domain in the interval 10 to 231 (VLLQNVSFRY…LDMQKKDALA (222 aa)). 44–51 (GENGSGKS) contributes to the ATP binding site.

It belongs to the ABC transporter superfamily.

It localises to the cell inner membrane. Functionally, part of an ATP-driven transport system TP_0034/TP_0035/TP_0036 for a metal. Probably responsible for energy coupling to the transport system. The protein is Probable metal transport system ATP-binding protein TP_0035 of Treponema pallidum (strain Nichols).